The following is a 235-amino-acid chain: Flavonoid 3',5'-methyltransferase (235 aa).

S-adenosyl-L-methionine contacts are provided by residues Val51, Glu73, 75–76 (GV), Ser81, Asp99, and Ala128. Asp151 contacts a divalent metal cation. S-adenosyl-L-methionine is bound at residue Asp153. Residues Asp177 and Asn178 each contribute to the a divalent metal cation site.

Belongs to the class I-like SAM-binding methyltransferase superfamily. Cation-dependent O-methyltransferase family. CCoAMT subfamily. Requires a divalent metal cation as cofactor.

Its subcellular location is the cytoplasm. It catalyses the reaction S-adenosyl-L-methionine + a 3'-hydroxyflavonoid = S-adenosyl-L-homocysteine + a 3'-methoxyflavonoid.. The enzyme catalyses S-adenosyl-L-methionine + a 5'-hydroxy-3'-methoxyflavonoid = S-adenosyl-L-homocysteine + a 3',5'-dimethoxyflavonoid.. It participates in pigment biosynthesis; anthocyanin biosynthesis. Its function is as follows. Mediates O-methylation of anthocyanins. Anthocyanins are major pigments in grapes: at ripening initiation in red grapevine berries, the exocarp turns color from green to red and then to purple due to the accumulation and extent of methylation of anthocyanins. Catalyzes both 3' and 5' O-methylation of anthocyanins, with a preference for glycosylated substrates. Active on both anthocyanins and flavonols in vitro. Most active with delphinidin 3-glucoside but also acts on cyanidin 3-glucoside, cyanidin, myricetin, quercetin and quercetin 3-glucoside. Not able to methylate flavan type skeletons with chiral centers, such as catechins or dihydroquercetin. The polypeptide is Flavonoid 3',5'-methyltransferase (FAOMT) (Vitis vinifera (Grape)).